Reading from the N-terminus, the 519-residue chain is Cell division cycle protein 20 homolog B (519 aa).

The span at 79–98 (QSQTRALSSDSFGEEQSTTY) shows a compositional bias: polar residues. A disordered region spans residues 79-133 (QSQTRALSSDSFGEEQSTTYLPEASGSVLKTPPEKETLTLGSRKEQLKTPSKGIS). A compositionally biased stretch (basic and acidic residues) spans 110–125 (PPEKETLTLGSRKEQL). WD repeat units follow at residues 229–266 (RNDY…GIEN), 271–310 (LTCN…RLRN), 311–341 (MLGH…YHHD), 353–392 (RHKQ…SAQG), 399–441 (TQST…SIQT), 443–484 (STNS…RSGG), and 487–519 (GHRG…WNCY).

It belongs to the WD repeat CDC20/Fizzy family. In terms of tissue distribution, expressed in multiciliated cells (MCCs).

It localises to the cytoplasm. Protein regulator of centriole-deuterosome disengagement and subsequently participates in the ciliogenesis in multiciliated cells (MCCs). The protein is Cell division cycle protein 20 homolog B of Homo sapiens (Human).